The primary structure comprises 146 residues: Inner membrane protein YdgK (146 aa).

Over 1–12 the chain is Cytoplasmic; the sequence is MTTTTPQRIGGW. Residues 13–33 form a helical membrane-spanning segment; sequence LLGPLAWLLVALLSTTLALLL. Topologically, residues 34 to 59 are periplasmic; that stretch reads YTAALSSPQTFQTLGGQALTTQILWG. Residues 60-80 form a helical membrane-spanning segment; sequence VSFITAIALWYYTLWLTIAFF. Residues 81 to 89 are Cytoplasmic-facing; the sequence is KRRRCVPKH. A helical transmembrane segment spans residues 90–110; it reads YIIWLLISVLLAVKAFAFSPV. Over 111 to 112 the chain is Periplasmic; that stretch reads ED. A helical transmembrane segment spans residues 113 to 133; sequence GIAVRQLLFTLLATALIVPYF. At 134-146 the chain is on the cytoplasmic side; it reads KRSSRVKATFVNP.

This sequence to Synechocystis PCC 6803 sll0481.

Its subcellular location is the cell inner membrane. This Escherichia coli (strain K12) protein is Inner membrane protein YdgK (ydgK).